The chain runs to 39 residues: Cytochrome b559 subunit beta (39 aa).

A helical membrane pass occupies residues 14-30 (WLAIHGLAVPTVSFLGS). A heme-binding site is contributed by H18.

This sequence belongs to the PsbE/PsbF family. Heterodimer of an alpha subunit and a beta subunit. PSII is composed of 1 copy each of membrane proteins PsbA, PsbB, PsbC, PsbD, PsbE, PsbF, PsbH, PsbI, PsbJ, PsbK, PsbL, PsbM, PsbT, PsbX, PsbY, PsbZ, Psb30/Ycf12, at least 3 peripheral proteins of the oxygen-evolving complex and a large number of cofactors. It forms dimeric complexes. Requires heme b as cofactor.

The protein resides in the plastid. It localises to the chloroplast thylakoid membrane. In terms of biological role, this b-type cytochrome is tightly associated with the reaction center of photosystem II (PSII). PSII is a light-driven water:plastoquinone oxidoreductase that uses light energy to abstract electrons from H(2)O, generating O(2) and a proton gradient subsequently used for ATP formation. It consists of a core antenna complex that captures photons, and an electron transfer chain that converts photonic excitation into a charge separation. This is Cytochrome b559 subunit beta from Allium textile (Textile onion).